A 155-amino-acid chain; its full sequence is Myosin light chain alkali (155 aa).

EF-hand domains are found at residues 7–41 (REVE…LNLN) and 80–115 (GCYE…LGES).

In terms of assembly, myosin is a hexamer of 2 heavy chains and 4 light chains.

This chain is Myosin light chain alkali (Mlc1), found in Drosophila virilis (Fruit fly).